The chain runs to 411 residues: Argininosuccinate synthase (411 aa).

Residues 11-19 (AYSGGLDTS) and A37 each bind ATP. Y88 and S93 together coordinate L-citrulline. Position 116-124 (116-124 (SHGATGKGN)) interacts with ATP. T120, N124, and D125 together coordinate L-aspartate. N124 serves as a coordination point for L-citrulline. L-citrulline contacts are provided by R128, S181, S190, E271, and Y283.

This sequence belongs to the argininosuccinate synthase family. As to quaternary structure, homotetramer.

It is found in the cytoplasm. It localises to the cytosol. It catalyses the reaction L-citrulline + L-aspartate + ATP = 2-(N(omega)-L-arginino)succinate + AMP + diphosphate + H(+). It functions in the pathway amino-acid biosynthesis; L-arginine biosynthesis; L-arginine from L-ornithine and carbamoyl phosphate: step 2/3. Its pathway is nitrogen metabolism; urea cycle; (N(omega)-L-arginino)succinate from L-aspartate and L-citrulline: step 1/1. In terms of biological role, one of the enzymes of the urea cycle, the metabolic pathway transforming neurotoxic amonia produced by protein catabolism into inocuous urea in the liver of ureotelic animals. Catalyzes the formation of arginosuccinate from aspartate, citrulline and ATP and together with ASL it is responsible for the biosynthesis of arginine in most body tissues. This chain is Argininosuccinate synthase, found in Xenopus laevis (African clawed frog).